A 447-amino-acid polypeptide reads, in one-letter code: Beclin-1 (447 aa).

A BH3 motif is present at residues 105–124; that stretch reads TMENLSRRLKVTSNLFDIMS. The tract at residues 109-156 is interaction with BCL2 and BCL2L1 isoform Bcl-X(L); it reads LSRRLKVTSNLFDIMSGQTDIDHPLCEECTDTLLDHLDTQLNITENEC. The stretch at 140-214 forms a coiled coil; sequence TLLDHLDTQL…VAKELDEGRN (75 aa). Residues 242–447 form an evolutionary conserved domain (ECD) region; that stretch reads DDLKSVDNQM…AWVSSQFYNR (206 aa). Residue Lys399 forms a Glycyl lysine isopeptide (Lys-Gly) (interchain with G-Cter in ubiquitin) linkage. A required for membrane-association region spans residues 422 to 447; that stretch reads WTKALKFMLTNLKWGLAWVSSQFYNR.

It belongs to the beclin family. In terms of assembly, component of the PI3K (PI3KC3/PI3K-III/class III phosphatidylinositol 3-kinase) complex. Interacts with the poly-Gln domain of ATXN3; the interaction causes deubiquitination at Lys-399 and stabilizes BECN1. In terms of processing, polyubiquitinated at Lys-399 with 'Lys-48'-linkages. 'Lys-48'-linked polyubiquitination of Lys-399 leads to degradation. Deubiquitinated by ATXN3, leading to stabilization.

It is found in the cytoplasm. The protein resides in the golgi apparatus. Its subcellular location is the trans-Golgi network membrane. It localises to the endosome membrane. The protein localises to the endoplasmic reticulum membrane. It is found in the mitochondrion membrane. The protein resides in the endosome. Its subcellular location is the cytoplasmic vesicle. It localises to the autophagosome. Plays a central role in autophagy. Acts as a core subunit of different PI3K complex forms that mediate formation of phosphatidylinositol 3-phosphate and are believed to play a role in multiple membrane trafficking pathways: PI3KC3-C1 is involved in initiation of autophagosomes and PI3KC3-C2 in maturation of autophagosomes and endocytosis. Involved in regulation of degradative endocytic trafficking and required for the abscission step in cytokinesis, probably in the context of PI3KC3-C2. Essential for the formation of PI3KC3-C2 but not PI3KC3-C1 PI3K complex forms. Involved in endocytosis including endosome formation in neuronal cells. The protein is Beclin-1 (becn1) of Danio rerio (Zebrafish).